The following is a 192-amino-acid chain: Protein MTH_857 (192 aa).

Residues 9-192 (DEGRTLVKIA…FQAQIFHEDG (184 aa)) form the AMMECR1 domain.

The chain is Protein MTH_857 from Methanothermobacter thermautotrophicus (strain ATCC 29096 / DSM 1053 / JCM 10044 / NBRC 100330 / Delta H) (Methanobacterium thermoautotrophicum).